The following is a 54-amino-acid chain: Large ribosomal subunit protein bL32c (54 aa).

This sequence belongs to the bacterial ribosomal protein bL32 family.

It localises to the plastid. The protein resides in the chloroplast. This Cucumis sativus (Cucumber) protein is Large ribosomal subunit protein bL32c.